The following is a 119-amino-acid chain: Large ribosomal subunit protein uL22c (119 aa).

This sequence belongs to the universal ribosomal protein uL22 family. In terms of assembly, part of the 50S ribosomal subunit.

The protein localises to the plastid. It localises to the chloroplast. This protein binds specifically to 23S rRNA. Its function is as follows. The globular domain of the protein is located near the polypeptide exit tunnel on the outside of the subunit, while an extended beta-hairpin is found that lines the wall of the exit tunnel in the center of the 70S ribosome. The polypeptide is Large ribosomal subunit protein uL22c (rpl22) (Chlorokybus atmophyticus (Soil alga)).